Reading from the N-terminus, the 303-residue chain is Cathepsin B-like CP1 (303 aa).

The N-terminal stretch at methionine 1–alanine 19 is a signal peptide. A glycan (N-linked (GlcNAc...) asparagine) is linked at asparagine 41. Disulfide bonds link cysteine 92–cysteine 119, cysteine 102–cysteine 145, and cysteine 138–cysteine 181. Cysteine 105 is an active-site residue. Catalysis depends on residues histidine 249 and asparagine 270.

It belongs to the peptidase C1 family.

The protein localises to the vacuole. Thiol protease which is required for parasite excystation and invasion of the proximal small intestine of the human host. The protein is Cathepsin B-like CP1 (CP1) of Giardia intestinalis (Giardia lamblia).